A 398-amino-acid polypeptide reads, in one-letter code: Cation channel sperm-associated protein 3 (398 aa).

At 1 to 48 (MSQHRHQRHSRVISSSPVDTTSVGFCPTFKKFKRNDDECRAFVKRVIM) the chain is on the cytoplasmic side. Residues 49 to 71 (SRFFKIIMISTVTSNAFFMALWT) traverse the membrane as a helical segment. At 72 to 80 (SYDIRYRLF) the chain is on the extracellular side. Residues 81 to 107 (RLLEFSEIFFVSICTSELSMKVYVDPI) form a helical membrane-spanning segment. N108 is a topological domain (cytoplasmic). Residues 109-131 (YWKNGYNLLDVIIIIVMFLPYAL) traverse the membrane as a helical segment. Topologically, residues 132–143 (RQLMGKQFTYLY) are extracellular. A helical membrane pass occupies residues 144-160 (IADGMQSLRILKLIGYS). Topologically, residues 161–168 (QGIRTLIT) are cytoplasmic. A helical transmembrane segment spans residues 169–195 (AVGQTVYTVASVLLLLFLLMYIFAILG). The Extracellular portion of the chain corresponds to 196-216 (FCLFGSPDNGDHDNWGNLAAA). The helical; Pore-forming intramembrane region spans 217–236 (FFTLFSLATVDGWTDLQKQL). The Extracellular segment spans residues 237 to 242 (DNREFA). Residues 243–268 (LSRAFTIIFILLASFIFLNMFVGVMI) traverse the membrane as a helical segment. Residues 269-398 (MHTEDSIRKF…PQSLEKVDEK (130 aa)) are Cytoplasmic-facing.

The protein belongs to the cation channel sperm-associated (TC 1.A.1.19) family. As to quaternary structure, component of the CatSper complex or CatSpermasome composed of the core pore-forming members CATSPER1, CATSPER2, CATSPER3 and CATSPER4 as well as auxiliary members CATSPERB, CATSPERG, CATSPERD, CATSPERE, CATSPERZ, C2CD6/CATSPERT, TMEM249, TMEM262 and EFCAB9. HSPA1 may be an additional auxiliary complex member. The core complex members CATSPER1, CATSPER2, CATSPER3 and CATSPER4 form a heterotetrameric channel. The auxiliary CATSPERB, CATSPERG, CATSPERD and CATSPERE subunits form a pavilion-like structure over the pore which stabilizes the complex through interactions with CATSPER4, CATSPER3, CATSPER1 and CATSPER2 respectively. TMEM262/CATSPERH interacts with CATSPERB, further stabilizing the complex. C2CD6/CATSPERT interacts at least with CATSPERD and is required for targeting the CatSper complex in the flagellar membrane. As to expression, testis-specific.

Its subcellular location is the cell projection. The protein localises to the cilium. It is found in the flagellum membrane. The catalysed reaction is Ca(2+)(in) = Ca(2+)(out). The CatSper calcium channel is indirectly activated by extracellular progesterone and prostaglandins following the sequence: progesterone &gt; PGF1-alpha = PGE1 &gt; PGA1 &gt; PGE2 &gt;&gt; PGD2. The CatSper calcium channel is directly inhibited by endocannabinoid 2-arachidonoylglycerol (2AG). Indirect activation by progesterone takes place via the following mechanism: progesterone binds and activates the acylglycerol lipase ABHD2, which in turn mediates hydrolysis of 2AG inhibitor, relieving inhibition of the CatSper channel. The primary effect of progesterone activation is to shift voltage dependence towards more physiological, negative membrane potentials; it is not mediated by metabotropic receptors and second messengers. Sperm capacitation enhances the effect of progesterone by providing additional negative shift. Also activated by the elevation of intracellular pH. Functionally, pore-forming subunit of the CatSper complex, a sperm-specific voltage-gated calcium channel that plays a central role in calcium-dependent physiological responses essential for successful fertilization, such as sperm hyperactivation, acrosome reaction and chemotaxis towards the oocyte. The protein is Cation channel sperm-associated protein 3 (CATSPER3) of Homo sapiens (Human).